The sequence spans 81 residues: Protein I5 homolog (81 aa).

2 helical membrane passes run 8-28 (LITI…FSLV) and 53-73 (MEIF…AAYI).

Belongs to the Chordopoxvirinae I5 family.

It is found in the virion membrane. The polypeptide is Protein I5 homolog (Vertebrata (FPV)).